Reading from the N-terminus, the 275-residue chain is Phospholipid scramblase (275 aa).

A helical transmembrane segment spans residues 256-272; the sequence is WKMMLLAFALFLDYMYY.

This sequence belongs to the phospholipid scramblase family. Forms homooligomers in the presence of calcium. The cofactor is Ca(2+). Mg(2+) is required as a cofactor.

The protein localises to the membrane. It localises to the cell membrane. It carries out the reaction a 1,2-diacyl-sn-glycero-3-phosphoethanolamine(in) = a 1,2-diacyl-sn-glycero-3-phosphoethanolamine(out). Its function is as follows. Catalyzes calcium-induced ATP-independent rapid bidirectional and non-specific movement of phospholipids (lipid scrambling or lipid flip-flop) between the inner and outer leaflet of the plasma membrane resulting in collapse of the phospholipid asymmetry. Preferentially, mediates calcium-dependent phosphatidylethanolamine externalization. During the liver stage, plays a role in the interaction with, and thus invasion of, host hepatocytes. Dispensable for host erythrocyte invasion and asexual parasite development. The chain is Phospholipid scramblase from Plasmodium falciparum (isolate 3D7).